The following is a 201-amino-acid chain: Dephospho-CoA kinase (201 aa).

Residues Val-4–Lys-201 form the DPCK domain. Ala-12–Thr-17 provides a ligand contact to ATP.

The protein belongs to the CoaE family.

It is found in the cytoplasm. The enzyme catalyses 3'-dephospho-CoA + ATP = ADP + CoA + H(+). The protein operates within cofactor biosynthesis; coenzyme A biosynthesis; CoA from (R)-pantothenate: step 5/5. Its function is as follows. Catalyzes the phosphorylation of the 3'-hydroxyl group of dephosphocoenzyme A to form coenzyme A. The protein is Dephospho-CoA kinase of Bacillus licheniformis (strain ATCC 14580 / DSM 13 / JCM 2505 / CCUG 7422 / NBRC 12200 / NCIMB 9375 / NCTC 10341 / NRRL NRS-1264 / Gibson 46).